A 137-amino-acid polypeptide reads, in one-letter code: Probable 4-amino-4-deoxy-L-arabinose-phosphoundecaprenol flippase subunit ArnF (137 aa).

The Cytoplasmic portion of the chain corresponds to 1–5; that stretch reads MNVPR. A helical transmembrane segment spans residues 6-26; the sequence is GWLAALGSVLLVSAAQLGMRW. Over 27 to 44 the chain is Periplasmic; the sequence is GMSRLPLPEAWAGQTPEH. A helical membrane pass occupies residues 45–65; sequence AALLAVALAVAAYAASLLCWL. The Cytoplasmic portion of the chain corresponds to 66–76; the sequence is AALRHLPLGRA. The helical transmembrane segment at 77–97 threads the bilayer; the sequence is YSLLSASYALVYLLAASLPAF. The Periplasmic portion of the chain corresponds to 98–100; sequence EET. A helical transmembrane segment spans residues 101–121; that stretch reads FTTGKTLGVGLVVLGVLTVNA. At 122 to 137 the chain is on the cytoplasmic side; that stretch reads RRTAAAPAHHPSRKAL.

It belongs to the ArnF family. As to quaternary structure, heterodimer of ArnE and ArnF.

The protein localises to the cell inner membrane. The protein operates within bacterial outer membrane biogenesis; lipopolysaccharide biosynthesis. Translocates 4-amino-4-deoxy-L-arabinose-phosphoundecaprenol (alpha-L-Ara4N-phosphoundecaprenol) from the cytoplasmic to the periplasmic side of the inner membrane. In Pseudomonas paraeruginosa (strain DSM 24068 / PA7) (Pseudomonas aeruginosa (strain PA7)), this protein is Probable 4-amino-4-deoxy-L-arabinose-phosphoundecaprenol flippase subunit ArnF.